The sequence spans 383 residues: MTVTAPKGSTGGGCRRGSKESGQPDLALVVNEGPRRAAAGVFTANRVKAAPVLWSQQVLRGGEVSAVVLNSGGANACTGPKGFQDTHATAERAAAALGHSAAEIAVASTGLIGTYLPMDRLLPGIDKAAAELSPHGGERAAIAIRTTDTVHKTAVRAGEGWSVGGMAKGAGMLAPGLATLLVVLTTDADLAPPVLDKAVRDAVRTTFERVDSDGCMSTNDTVLLLASGASGGDPGYEEFADVLREVCEDLARKLIGDAEGASKDIRIEVIHAATEDDAVEVGRTIARNNLLKCAIHGEDPNWGRVLSAIGTTKAVFEPERLNVAINGVWVCREGSAGDGRDLVDMRFREVRITADLDAGTHSAVIWANDLTAEYVHENSAYSS.

Positions 1–25 (MTVTAPKGSTGGGCRRGSKESGQPD) are disordered. 6 residues coordinate substrate: T146, K168, T179, E259, N378, and S383. T179 functions as the Nucleophile in the catalytic mechanism.

It belongs to the ArgJ family. In terms of assembly, heterotetramer of two alpha and two beta chains.

The protein localises to the cytoplasm. The catalysed reaction is N(2)-acetyl-L-ornithine + L-glutamate = N-acetyl-L-glutamate + L-ornithine. It catalyses the reaction L-glutamate + acetyl-CoA = N-acetyl-L-glutamate + CoA + H(+). It participates in amino-acid biosynthesis; L-arginine biosynthesis; L-ornithine and N-acetyl-L-glutamate from L-glutamate and N(2)-acetyl-L-ornithine (cyclic): step 1/1. Its pathway is amino-acid biosynthesis; L-arginine biosynthesis; N(2)-acetyl-L-ornithine from L-glutamate: step 1/4. Its function is as follows. Catalyzes two activities which are involved in the cyclic version of arginine biosynthesis: the synthesis of N-acetylglutamate from glutamate and acetyl-CoA as the acetyl donor, and of ornithine by transacetylation between N(2)-acetylornithine and glutamate. This is Arginine biosynthesis bifunctional protein ArgJ 1 from Streptomyces clavuligerus.